Consider the following 150-residue polypeptide: uncharacterized protein (150 aa).

The protein belongs to the OsmC/Ohr family.

This is an uncharacterized protein from Bacillus subtilis (strain 168).